The sequence spans 322 residues: Beta-1,4-galactosyltransferase 7 (322 aa).

Over 1–9 (MVNISTINW) the chain is Cytoplasmic. A helical; Signal-anchor for type II membrane protein transmembrane segment spans residues 10–30 (VFVCGLSFCLGGIAVLSLMPL). The Lumenal segment spans residues 31–322 (GSDCVCPLSN…TAAAASAVQT (292 aa)). Positions 82, 84, 145, and 146 each coordinate UDP-alpha-D-galactose. Asp147 provides a ligand contact to Mn(2+). Residues Tyr177, Gly185, Trp207, and Gly208 each contribute to the UDP-alpha-D-galactose site. Leu209 lines the beta-D-xylose pocket. Position 210 (Glu210) interacts with UDP-alpha-D-galactose. Residues Asp211 and Asp212 each contribute to the beta-D-xylose site. Asn236 carries N-linked (GlcNAc...) asparagine glycosylation. UDP-alpha-D-galactose-binding residues include His241, His243, and Arg250. His241 and His243 together coordinate Mn(2+). Intrachain disulfides connect Cys255-Cys310 and Cys300-Cys308.

The protein belongs to the glycosyltransferase 7 family. Mn(2+) is required as a cofactor. As to expression, expressed in male and female adults. Expressed in head.

The protein localises to the golgi apparatus membrane. The catalysed reaction is 3-O-(beta-D-xylosyl)-L-seryl-[protein] + UDP-alpha-D-galactose = 3-O-(beta-D-galactosyl-(1-&gt;4)-beta-D-xylosyl)-L-seryl-[protein] + UDP + H(+). It functions in the pathway protein modification; protein glycosylation. Functionally, transfers galactose from UDP-D-Galactose (UDP-Gal) to the acceptor xylose residue in the linkage tetrasaccharide region of the glycosaminoglycan side chain of proteoglycans. No activity towards beta-GlcNAc, beta-Glc, beta-Gal, and beta-GalNAc as acceptors. The sequence is that of Beta-1,4-galactosyltransferase 7 from Drosophila melanogaster (Fruit fly).